A 355-amino-acid chain; its full sequence is Serpentine receptor class epsilon-1 (355 aa).

7 helical membrane-spanning segments follow: residues Phe-28–Ile-48, Leu-56–Ile-76, Ile-102–Val-122, Ile-144–Leu-164, Val-172–Phe-192, Val-232–Ser-252, and Phe-268–Ser-288.

This sequence belongs to the nematode receptor-like protein sre family.

The protein resides in the membrane. The chain is Serpentine receptor class epsilon-1 (sre-1) from Caenorhabditis elegans.